A 280-amino-acid chain; its full sequence is 3-phenylpropionate-dihydrodiol/cinnamic acid-dihydrodiol dehydrogenase (280 aa).

Ser-143 serves as a coordination point for substrate. Tyr-156 acts as the Proton acceptor in catalysis.

Belongs to the short-chain dehydrogenases/reductases (SDR) family.

It catalyses the reaction 3-(cis-5,6-dihydroxycyclohexa-1,3-dien-1-yl)propanoate + NAD(+) = 3-(2,3-dihydroxyphenyl)propanoate + NADH + H(+). The catalysed reaction is (2E)-3-(cis-5,6-dihydroxycyclohexa-1,3-dien-1-yl)prop-2-enoate + NAD(+) = (2E)-3-(2,3-dihydroxyphenyl)prop-2-enoate + NADH + H(+). Its pathway is aromatic compound metabolism; 3-phenylpropanoate degradation. Functionally, converts 3-phenylpropionate-dihydrodiol (PP-dihydrodiol) and cinnamic acid-dihydrodiol (CI-dihydrodiol) into 3-(2,3-dihydroxylphenyl)propanoic acid (DHPP) and 2,3-dihydroxicinnamic acid (DHCI), respectively. The sequence is that of 3-phenylpropionate-dihydrodiol/cinnamic acid-dihydrodiol dehydrogenase from Photorhabdus laumondii subsp. laumondii (strain DSM 15139 / CIP 105565 / TT01) (Photorhabdus luminescens subsp. laumondii).